Reading from the N-terminus, the 234-residue chain is NAD-dependent protein deacylase (234 aa).

In terms of domain architecture, Deacetylase sirtuin-type spans 1–234 (MTKQVRIVVL…LVPHYLAQFL (234 aa)). 12–31 (GAGISAESGIRTFRATDGLW) is a binding site for NAD(+). Positions 56 and 59 each coordinate substrate. 93-96 (QNVD) provides a ligand contact to NAD(+). The active-site Proton acceptor is the His111. Residues Cys119 and Cys138 each contribute to the Zn(2+) site. Residues 178–180 (GTS), 204–206 (NLE), and Ala222 each bind NAD(+).

Belongs to the sirtuin family. Class III subfamily. Zn(2+) is required as a cofactor.

It localises to the cytoplasm. The enzyme catalyses N(6)-acetyl-L-lysyl-[protein] + NAD(+) + H2O = 2''-O-acetyl-ADP-D-ribose + nicotinamide + L-lysyl-[protein]. The catalysed reaction is N(6)-succinyl-L-lysyl-[protein] + NAD(+) + H2O = 2''-O-succinyl-ADP-D-ribose + nicotinamide + L-lysyl-[protein]. In terms of biological role, NAD-dependent lysine deacetylase and desuccinylase that specifically removes acetyl and succinyl groups on target proteins. Modulates the activities of several proteins which are inactive in their acylated form. In Pasteurella multocida (strain Pm70), this protein is NAD-dependent protein deacylase.